The primary structure comprises 275 residues: Lysosome-associated membrane glycoprotein 5 (275 aa).

The N-terminal stretch at 1-18 (MEFQLLLLCSVWALGVCA) is a signal peptide. Topologically, residues 19–228 (EQEVENLSGL…VTDQREQLEQ (210 aa)) are extracellular. N-linked (GlcNAc...) asparagine glycans are attached at residues Asn-24 and Asn-42. Residues 229-249 (TLPLVLGLILGLIIVITISVY) traverse the membrane as a helical segment. Residues 250-275 (HFHLKLNAAHTQQPTLPRDRSLYKNM) are Cytoplasmic-facing.

This sequence belongs to the LAMP family. Post-translationally, glycosylated.

Its subcellular location is the cytoplasmic vesicle membrane. It is found in the cell membrane. The protein resides in the cell projection. It localises to the dendrite. The protein localises to the cytoplasmic vesicle. Its subcellular location is the secretory vesicle. It is found in the synaptic vesicle membrane. The protein resides in the growth cone membrane. It localises to the early endosome membrane. The protein localises to the recycling endosome. Its subcellular location is the endoplasmic reticulum-Golgi intermediate compartment membrane. It is found in the endosome membrane. In terms of biological role, plays a role in short-term synaptic plasticity in a subset of GABAergic neurons in the brain. In Danio rerio (Zebrafish), this protein is Lysosome-associated membrane glycoprotein 5 (lamp5).